Reading from the N-terminus, the 361-residue chain is Phospho-N-acetylmuramoyl-pentapeptide-transferase (361 aa).

10 consecutive transmembrane segments (helical) span residues 26 to 46 (AGGA…CIIE), 71 to 91 (TPTM…FLWA), 97 to 117 (FILW…CDDY), 134 to 154 (IFGQ…FPSN), 168 to 188 (GFFI…IVGS), 200 to 220 (GLAI…AYFA), 236 to 256 (GAGE…GFLW), 264 to 284 (IFMG…VSLF), 290 to 310 (VLVL…IQIF), and 338 to 358 (KVTV…FASL).

It belongs to the glycosyltransferase 4 family. MraY subfamily. Mg(2+) is required as a cofactor.

It localises to the cell membrane. The enzyme catalyses UDP-N-acetyl-alpha-D-muramoyl-L-alanyl-gamma-D-glutamyl-meso-2,6-diaminopimeloyl-D-alanyl-D-alanine + di-trans,octa-cis-undecaprenyl phosphate = di-trans,octa-cis-undecaprenyl diphospho-N-acetyl-alpha-D-muramoyl-L-alanyl-D-glutamyl-meso-2,6-diaminopimeloyl-D-alanyl-D-alanine + UMP. It functions in the pathway cell wall biogenesis; peptidoglycan biosynthesis. In terms of biological role, catalyzes the initial step of the lipid cycle reactions in the biosynthesis of the cell wall peptidoglycan: transfers peptidoglycan precursor phospho-MurNAc-pentapeptide from UDP-MurNAc-pentapeptide onto the lipid carrier undecaprenyl phosphate, yielding undecaprenyl-pyrophosphoryl-MurNAc-pentapeptide, known as lipid I. The chain is Phospho-N-acetylmuramoyl-pentapeptide-transferase from Endomicrobium trichonymphae.